Consider the following 472-residue polypeptide: Protein nucleotidyltransferase YdiU (472 aa).

Residues glycine 86, glycine 88, arginine 89, lysine 109, aspartate 121, glycine 122, arginine 172, and arginine 179 each contribute to the ATP site. Aspartate 244 functions as the Proton acceptor in the catalytic mechanism. Residues asparagine 245 and aspartate 254 each contribute to the Mg(2+) site. Aspartate 254 is an ATP binding site.

It belongs to the SELO family. The cofactor is Mg(2+). Mn(2+) serves as cofactor.

It catalyses the reaction L-seryl-[protein] + ATP = 3-O-(5'-adenylyl)-L-seryl-[protein] + diphosphate. The catalysed reaction is L-threonyl-[protein] + ATP = 3-O-(5'-adenylyl)-L-threonyl-[protein] + diphosphate. It carries out the reaction L-tyrosyl-[protein] + ATP = O-(5'-adenylyl)-L-tyrosyl-[protein] + diphosphate. The enzyme catalyses L-histidyl-[protein] + UTP = N(tele)-(5'-uridylyl)-L-histidyl-[protein] + diphosphate. It catalyses the reaction L-seryl-[protein] + UTP = O-(5'-uridylyl)-L-seryl-[protein] + diphosphate. The catalysed reaction is L-tyrosyl-[protein] + UTP = O-(5'-uridylyl)-L-tyrosyl-[protein] + diphosphate. Functionally, nucleotidyltransferase involved in the post-translational modification of proteins. It can catalyze the addition of adenosine monophosphate (AMP) or uridine monophosphate (UMP) to a protein, resulting in modifications known as AMPylation and UMPylation. The protein is Protein nucleotidyltransferase YdiU of Ruegeria pomeroyi (strain ATCC 700808 / DSM 15171 / DSS-3) (Silicibacter pomeroyi).